A 300-amino-acid chain; its full sequence is DDRGK domain-containing protein 1 (300 aa).

Residues 1–2 lie on the Lumenal side of the membrane; sequence MD. Residues 3–23 traverse the membrane as a helical segment; it reads VVLYIAAAAILLVLIVFSVKI. Over 24–300 the chain is Cytoplasmic; the sequence is RGRTQDADVE…NLTPDIHSSA (277 aa). Residues 28–173 form a disordered region; the sequence is QDADVEDHQN…RVKEEQERRE (146 aa). Residues 78–90 are compositionally biased toward acidic residues; that stretch reads NEDSPVEADEDEE. Positions 112-173 are enriched in basic and acidic residues; that stretch reads KLEEKQARKA…RVKEEQERRE (62 aa). Positions 183-197 match the UFM1-interacting motif (UFIM) motif; that stretch reads SFIIEDQGEAEELTE. Residues 217–261 form the PCI domain; the sequence is VLLEDLASQFGLRTQDAIARLQDLIADGSLTGVIDDRGKFIFITP.

The protein belongs to the DDRGK1 family. As to quaternary structure, component of the UFM1 ribosome E3 ligase (UREL) complex, composed of ufl1, ddrgk1 and cdk5rap3.

It localises to the endoplasmic reticulum membrane. Functionally, component of the UFM1 ribosome E3 ligase (UREL) complex, a multiprotein complex that catalyzes ufmylation of endoplasmic reticulum-docked proteins. The UREL complex plays a key role in ribosome recycling by mediating mono-ufmylation of the RPL26/uL24 subunit of the 60S ribosome following ribosome dissociation: ufmylation weakens the junction between post-termination 60S subunits and SEC61 translocons, promoting release and recycling of the large ribosomal subunit from the endoplasmic reticulum membrane. Ufmylation of RPL26/uL24 and subsequent 60S ribosome recycling either take place after normal termination of translation or after ribosome stalling during cotranslational translocation at the endoplasmic reticulum. Within the UREL complex, DDRGK1 tethers the complex to the endoplasmic reticulum membrane to restrict its activity to endoplasmic reticulum-docked ribosomes and acts as an ufmylation 'reader': following RPL26/uL24 ufmylation, DDRGK1 specifically binds to ufmylated RPL26/uL24 via its UFIM motif, resulting in stable association between the 60S ribosome and the UREL complex, followed by dissociation of the 60S ribosome subunit from the endoplasmic reticulum membrane. The UREL complex is also involved in reticulophagy in response to endoplasmic reticulum stress by promoting ufmylation of proteins such as CYB5R3 and RPN1, thereby promoting lysosomal degradation of ufmylated proteins. Plays a role in cartilage development through sox9, inhibiting the ubiquitin-mediated proteasomal degradation of this transcriptional regulator. Required for stabilization and ufmylation of ATG9A. This chain is DDRGK domain-containing protein 1, found in Danio rerio (Zebrafish).